Reading from the N-terminus, the 270-residue chain is Phospholysine phosphohistidine inorganic pyrophosphate phosphatase (270 aa).

The Mg(2+) site is built by D14 and S16. Substrate-binding positions include 14–16, 52–53, and K187; these read DVS and TN. D212 is a binding site for Mg(2+).

This sequence belongs to the HAD-like hydrolase superfamily. Requires Mg(2+) as cofactor.

The protein localises to the cytoplasm. Its subcellular location is the nucleus. The catalysed reaction is diphosphate + H2O = 2 phosphate + H(+). Its function is as follows. Phosphatase that hydrolyzes imidodiphosphate, 3-phosphohistidine and 6-phospholysine. Has broad substrate specificity and can also hydrolyze inorganic diphosphate, but with lower efficiency. The polypeptide is Phospholysine phosphohistidine inorganic pyrophosphate phosphatase (lhpp) (Xenopus laevis (African clawed frog)).